The sequence spans 125 residues: Fluoride-specific ion channel FluC (125 aa).

A run of 4 helical transmembrane segments spans residues 4-24, 32-52, 68-88, and 100-120; these read ILLV…VGLW, AFPW…GFLA, FLIT…LDAI, and LAYI…GLAL. 2 residues coordinate Na(+): G75 and T78.

It belongs to the fluoride channel Fluc/FEX (TC 1.A.43) family.

It is found in the cell inner membrane. It catalyses the reaction fluoride(in) = fluoride(out). Its activity is regulated as follows. Na(+) is not transported, but it plays an essential structural role and its presence is essential for fluoride channel function. In terms of biological role, fluoride-specific ion channel. Important for reducing fluoride concentration in the cell, thus reducing its toxicity. This Rhizobium meliloti (strain 1021) (Ensifer meliloti) protein is Fluoride-specific ion channel FluC.